Reading from the N-terminus, the 44-residue chain is Defensin-like protein 1 (44 aa).

Gln1 is modified (pyrrolidone carboxylic acid). A disulfide bridge connects residues Cys15 and Cys36.

It belongs to the DEFL family. As to quaternary structure, forms oligomers in its native state.

It is found in the secreted. Its function is as follows. Possesses antifungal activity sensitive to inorganic cations. This chain is Defensin-like protein 1 (AFP1), found in Brassica napus (Rape).